A 117-amino-acid polypeptide reads, in one-letter code: Ribosome-binding factor A (117 aa).

This sequence belongs to the RbfA family. As to quaternary structure, monomer. Binds 30S ribosomal subunits, but not 50S ribosomal subunits or 70S ribosomes.

It localises to the cytoplasm. Functionally, one of several proteins that assist in the late maturation steps of the functional core of the 30S ribosomal subunit. Associates with free 30S ribosomal subunits (but not with 30S subunits that are part of 70S ribosomes or polysomes). Required for efficient processing of 16S rRNA. May interact with the 5'-terminal helix region of 16S rRNA. The chain is Ribosome-binding factor A from Streptococcus thermophilus (strain CNRZ 1066).